We begin with the raw amino-acid sequence, 121 residues long: Large ribosomal subunit protein uL24 (121 aa).

The protein belongs to the universal ribosomal protein uL24 family. Part of the 50S ribosomal subunit.

One of two assembly initiator proteins, it binds directly to the 5'-end of the 23S rRNA, where it nucleates assembly of the 50S subunit. Its function is as follows. Located at the polypeptide exit tunnel on the outside of the subunit. This is Large ribosomal subunit protein uL24 from Pyrococcus furiosus (strain ATCC 43587 / DSM 3638 / JCM 8422 / Vc1).